We begin with the raw amino-acid sequence, 462 residues long: Glycine--tRNA ligase (462 aa).

2 residues coordinate substrate: arginine 100 and glutamate 174. ATP contacts are provided by residues arginine 206–glutamate 208, phenylalanine 216–phenylalanine 221, glutamate 290–leucine 291, and glycine 334–arginine 337. Phenylalanine 221–glutamate 225 contributes to the substrate binding site. Glutamate 330–glycine 334 contributes to the substrate binding site.

Belongs to the class-II aminoacyl-tRNA synthetase family. Homodimer.

The protein resides in the cytoplasm. The enzyme catalyses tRNA(Gly) + glycine + ATP = glycyl-tRNA(Gly) + AMP + diphosphate. Functionally, catalyzes the attachment of glycine to tRNA(Gly). The polypeptide is Glycine--tRNA ligase (Alkaliphilus oremlandii (strain OhILAs) (Clostridium oremlandii (strain OhILAs))).